The sequence spans 1182 residues: DNA-directed RNA polymerase subunit beta (1182 aa).

Belongs to the RNA polymerase beta chain family. The RNAP catalytic core consists of 2 alpha, 1 beta, 1 beta' and 1 omega subunit. When a sigma factor is associated with the core the holoenzyme is formed, which can initiate transcription.

It catalyses the reaction RNA(n) + a ribonucleoside 5'-triphosphate = RNA(n+1) + diphosphate. In terms of biological role, DNA-dependent RNA polymerase catalyzes the transcription of DNA into RNA using the four ribonucleoside triphosphates as substrates. The protein is DNA-directed RNA polymerase subunit beta of Fervidobacterium nodosum (strain ATCC 35602 / DSM 5306 / Rt17-B1).